A 146-amino-acid chain; its full sequence is GFLTAEEKGLVNGLWGKVNVDEVGGEALGRLLVVYPWTQRFFQSFGDLSSADAIMGNSKVKAHGKKVLNSFSDGLKNIDDLKGAFAKLSELHCDKLHVDPENFRLLGNVLVCVLAHHFGHEFNPQVQAAFQKVVAGVANALAHKYH.

The Globin domain occupies 2 to 146 (FLTAEEKGLV…VANALAHKYH (145 aa)). Ser44 carries the post-translational modification Phosphoserine. Lys59 is subject to N6-acetyllysine. Position 63 (His63) interacts with heme b. N6-acetyllysine is present on Lys82. His92 serves as a coordination point for heme b. Position 93 is an S-nitrosocysteine (Cys93). Lys144 is modified (N6-acetyllysine).

This sequence belongs to the globin family. Heterotetramer of two alpha chains and two beta chains. Red blood cells.

Functionally, involved in oxygen transport from the lung to the various peripheral tissues. The protein is Hemoglobin subunit beta (HBB) of Lynx lynx (Eurasian lynx).